We begin with the raw amino-acid sequence, 86 residues long: Omega-theraphotoxin-Hhn1f 1 (86 aa).

The N-terminal stretch at 1–21 (MKSIVFVALFGLALLAVVCSA) is a signal peptide. Residues 22 to 50 (SEDAHKELLKEVVRAMVVDKTDAVQAEER) constitute a propeptide that is removed on maturation. Cystine bridges form between C52-C66, C59-C71, and C65-C78.

It belongs to the neurotoxin 10 (Hwtx-1) family. 17 (Hntx-9) subfamily. Expressed by the venom gland.

The protein resides in the secreted. Functionally, ion channel inhibitor. The sequence is that of Omega-theraphotoxin-Hhn1f 1 from Cyriopagopus hainanus (Chinese bird spider).